We begin with the raw amino-acid sequence, 255 residues long: Ditrans,polycis-undecaprenyl-diphosphate synthase ((2E,6E)-farnesyl-diphosphate specific) (255 aa).

Residue D21 is part of the active site. D21 is a Mg(2+) binding site. Residues 22–25 (GNGR), W26, R34, H38, and 66–68 (SSE) each bind substrate. N69 functions as the Proton acceptor in the catalytic mechanism. Substrate-binding positions include W70, R72, R189, and 195–197 (RIS). Residue E208 coordinates Mg(2+).

This sequence belongs to the UPP synthase family. Homodimer. Mg(2+) is required as a cofactor.

The catalysed reaction is 8 isopentenyl diphosphate + (2E,6E)-farnesyl diphosphate = di-trans,octa-cis-undecaprenyl diphosphate + 8 diphosphate. Functionally, catalyzes the sequential condensation of isopentenyl diphosphate (IPP) with (2E,6E)-farnesyl diphosphate (E,E-FPP) to yield (2Z,6Z,10Z,14Z,18Z,22Z,26Z,30Z,34E,38E)-undecaprenyl diphosphate (di-trans,octa-cis-UPP). UPP is the precursor of glycosyl carrier lipid in the biosynthesis of bacterial cell wall polysaccharide components such as peptidoglycan and lipopolysaccharide. The chain is Ditrans,polycis-undecaprenyl-diphosphate synthase ((2E,6E)-farnesyl-diphosphate specific) from Xylella fastidiosa (strain Temecula1 / ATCC 700964).